The chain runs to 101 residues: NAD(P)H-quinone oxidoreductase subunit 4L (101 aa).

3 helical membrane passes run 3 to 23, 30 to 50, and 64 to 84; these read LQYF…GLVT, VLMS…AFSN, and IFVI…VLAI.

The protein belongs to the complex I subunit 4L family. As to quaternary structure, NDH-1 can be composed of about 15 different subunits; different subcomplexes with different compositions have been identified which probably have different functions.

Its subcellular location is the cellular thylakoid membrane. It carries out the reaction a plastoquinone + NADH + (n+1) H(+)(in) = a plastoquinol + NAD(+) + n H(+)(out). The enzyme catalyses a plastoquinone + NADPH + (n+1) H(+)(in) = a plastoquinol + NADP(+) + n H(+)(out). Functionally, NDH-1 shuttles electrons from an unknown electron donor, via FMN and iron-sulfur (Fe-S) centers, to quinones in the respiratory and/or the photosynthetic chain. The immediate electron acceptor for the enzyme in this species is believed to be plastoquinone. Couples the redox reaction to proton translocation, and thus conserves the redox energy in a proton gradient. Cyanobacterial NDH-1 also plays a role in inorganic carbon-concentration. The protein is NAD(P)H-quinone oxidoreductase subunit 4L of Leptolyngbya boryana (Plectonema boryanum).